The sequence spans 437 residues: Phosphomethylpyrimidine synthase (437 aa).

Substrate-binding positions include asparagine 69, methionine 98, tyrosine 127, histidine 163, 185 to 187 (SRG), 226 to 229 (DACR), and glutamate 265. Histidine 269 lines the Zn(2+) pocket. Tyrosine 292 is a binding site for substrate. Residue histidine 333 participates in Zn(2+) binding. [4Fe-4S] cluster is bound by residues cysteine 409, cysteine 412, and cysteine 416.

It belongs to the ThiC family. [4Fe-4S] cluster serves as cofactor.

It carries out the reaction 5-amino-1-(5-phospho-beta-D-ribosyl)imidazole + S-adenosyl-L-methionine = 4-amino-2-methyl-5-(phosphooxymethyl)pyrimidine + CO + 5'-deoxyadenosine + formate + L-methionine + 3 H(+). It participates in cofactor biosynthesis; thiamine diphosphate biosynthesis. Its function is as follows. Catalyzes the synthesis of the hydroxymethylpyrimidine phosphate (HMP-P) moiety of thiamine from aminoimidazole ribotide (AIR) in a radical S-adenosyl-L-methionine (SAM)-dependent reaction. The chain is Phosphomethylpyrimidine synthase from Clostridium botulinum (strain 657 / Type Ba4).